Reading from the N-terminus, the 474-residue chain is tRNA modification GTPase MnmE (474 aa).

(6S)-5-formyl-5,6,7,8-tetrahydrofolate is bound by residues Arg25, Glu82, and Lys123. The 168-residue stretch at 219–386 (GIKVVIAGKP…LKKHLYDSAM (168 aa)) folds into the TrmE-type G domain. Asn229 is a binding site for K(+). GTP is bound by residues 229–234 (NAGKSS), 248–254 (SNISGTT), and 273–276 (DTAG). Ser233 serves as a coordination point for Mg(2+). Positions 248, 250, and 253 each coordinate K(+). Residue Thr254 participates in Mg(2+) binding. Residue Lys474 coordinates (6S)-5-formyl-5,6,7,8-tetrahydrofolate.

The protein belongs to the TRAFAC class TrmE-Era-EngA-EngB-Septin-like GTPase superfamily. TrmE GTPase family. Homodimer. Heterotetramer of two MnmE and two MnmG subunits. K(+) serves as cofactor.

It is found in the cytoplasm. In terms of biological role, exhibits a very high intrinsic GTPase hydrolysis rate. Involved in the addition of a carboxymethylaminomethyl (cmnm) group at the wobble position (U34) of certain tRNAs, forming tRNA-cmnm(5)s(2)U34. The polypeptide is tRNA modification GTPase MnmE (Blochmanniella floridana).